The sequence spans 307 residues: Ribosomal RNA small subunit methyltransferase H (307 aa).

Residues 32 to 34, aspartate 52, phenylalanine 78, aspartate 99, and glutamine 106 contribute to the S-adenosyl-L-methionine site; that span reads GGH.

It belongs to the methyltransferase superfamily. RsmH family.

The protein resides in the cytoplasm. The enzyme catalyses cytidine(1402) in 16S rRNA + S-adenosyl-L-methionine = N(4)-methylcytidine(1402) in 16S rRNA + S-adenosyl-L-homocysteine + H(+). Functionally, specifically methylates the N4 position of cytidine in position 1402 (C1402) of 16S rRNA. The protein is Ribosomal RNA small subunit methyltransferase H of Acinetobacter baumannii (strain AB307-0294).